The following is a 261-amino-acid chain: UPF0246 protein AZOSEA34360 (261 aa).

It belongs to the UPF0246 family.

The polypeptide is UPF0246 protein AZOSEA34360 (Aromatoleum aromaticum (strain DSM 19018 / LMG 30748 / EbN1) (Azoarcus sp. (strain EbN1))).